We begin with the raw amino-acid sequence, 190 residues long: R46 site-specific recombinase (190 aa).

The Resolvase/invertase-type recombinase catalytic domain occupies 2 to 137 (RLFGYARVST…EGRQEAKLKG (136 aa)). The active-site O-(5'-phospho-DNA)-serine intermediate is serine 10. The segment at residues 161–180 (ATDIARRLSIARSTVYKILE) is a DNA-binding region (H-T-H motif).

This sequence belongs to the site-specific recombinase resolvase family.

In terms of biological role, site-specific recombination protein. This is R46 site-specific recombinase (tnpR) from Escherichia coli.